A 751-amino-acid chain; its full sequence is 1,3-beta-galactosyl-N-acetylhexosamine phosphorylase (751 aa).

The active-site Proton donor is the Asp-313.

The protein belongs to the glycoside hydrolase 112 family. In terms of assembly, homodimer.

The catalysed reaction is beta-D-galactosyl-(1-&gt;3)-N-acetyl-D-glucosamine + phosphate = alpha-D-galactose 1-phosphate + N-acetyl-D-glucosamine. In terms of biological role, reversibly phosphorolyzes lacto-N-biose to Gal1-P and N-acetylglucosamine (GlcNAc) and galacto-N-biose to Gal1-P and N-acetylgalactosamine (GalNAc). Involved in the lacto-N-biose I/galacto-N-biose (LNB/GNB) degradation pathway, which is important for host intestinal colonization by bifidobacteria. This chain is 1,3-beta-galactosyl-N-acetylhexosamine phosphorylase (lnpA), found in Bifidobacterium longum subsp. longum (strain ATCC 15707 / DSM 20219 / JCM 1217 / NCTC 11818 / E194b).